The following is a 160-amino-acid chain: Lymphocyte antigen 96 (160 aa).

A signal peptide spans 1-16; it reads MFPFMLFSTLFSSIFT. 3 cysteine pairs are disulfide-bonded: cysteine 25–cysteine 51, cysteine 37–cysteine 148, and cysteine 95–cysteine 105. A glycan (N-linked (GlcNAc...) asparagine) is linked at asparagine 26. A glycan (N-linked (GlcNAc...) asparagine) is linked at asparagine 114. Residues 119–123 are interaction with lipopolysaccharide; sequence FSFQG. Asparagine 150 carries N-linked (GlcNAc...) asparagine glycosylation.

In terms of assembly, heterogeneous homomer formed from homodimers; disulfide-linked. Belongs to the lipopolysaccharide (LPS) receptor, a multi-protein complex containing at least CD14, LY96 and TLR4. Binds to the extracellular domains of TLR2 and TLR4. Ligand binding induces interaction with TLR4 and oligomerization of the complex. Post-translationally, N-glycosylated.

It localises to the secreted. It is found in the extracellular space. Binds bacterial lipopolysaccharide (LPS). Cooperates with TLR4 in the innate immune response to bacterial lipopolysaccharide (LPS), and with TLR2 in the response to cell wall components from Gram-positive and Gram-negative bacteria. Enhances TLR4-dependent activation of NF-kappa-B. Cells expressing both LY96 and TLR4, but not TLR4 alone, respond to LPS. In Bos taurus (Bovine), this protein is Lymphocyte antigen 96 (LY96).